The sequence spans 187 residues: Large ribosomal subunit protein uL6 (187 aa).

The tract at residues 151–170 is disordered; that stretch reads EAARIRSLRPPEPYKGKGIK.

The protein belongs to the universal ribosomal protein uL6 family. Part of the 50S ribosomal subunit.

Its function is as follows. This protein binds to the 23S rRNA, and is important in its secondary structure. It is located near the subunit interface in the base of the L7/L12 stalk, and near the tRNA binding site of the peptidyltransferase center. In Chloroflexus aurantiacus (strain ATCC 29366 / DSM 635 / J-10-fl), this protein is Large ribosomal subunit protein uL6.